The following is a 519-amino-acid chain: Histidine ammonia-lyase (519 aa).

The 5-imidazolinone (Ala-Gly) cross-link spans 146–148 (ASG). Ser-147 carries the 2,3-didehydroalanine (Ser) modification.

The protein belongs to the PAL/histidase family. Post-translationally, contains an active site 4-methylidene-imidazol-5-one (MIO), which is formed autocatalytically by cyclization and dehydration of residues Ala-Ser-Gly.

It localises to the cytoplasm. It catalyses the reaction L-histidine = trans-urocanate + NH4(+). It participates in amino-acid degradation; L-histidine degradation into L-glutamate; N-formimidoyl-L-glutamate from L-histidine: step 1/3. The chain is Histidine ammonia-lyase from Bradyrhizobium diazoefficiens (strain JCM 10833 / BCRC 13528 / IAM 13628 / NBRC 14792 / USDA 110).